A 427-amino-acid polypeptide reads, in one-letter code: Adenylosuccinate synthetase (427 aa).

GTP-binding positions include 12–18 (GDEGKGK) and 40–42 (GHT). The active-site Proton acceptor is the Asp13. Asp13 and Gly40 together coordinate Mg(2+). Residues 13-16 (DEGK), 38-41 (NAGH), Thr128, Arg142, Gln223, Thr238, and Arg302 contribute to the IMP site. The Proton donor role is filled by His41. 298-304 (VTTGRAR) serves as a coordination point for substrate. GTP is bound by residues Arg304, 330–332 (KLD), and 412–414 (GVG).

Belongs to the adenylosuccinate synthetase family. In terms of assembly, homodimer. It depends on Mg(2+) as a cofactor.

The protein resides in the cytoplasm. It catalyses the reaction IMP + L-aspartate + GTP = N(6)-(1,2-dicarboxyethyl)-AMP + GDP + phosphate + 2 H(+). The protein operates within purine metabolism; AMP biosynthesis via de novo pathway; AMP from IMP: step 1/2. In terms of biological role, plays an important role in the de novo pathway of purine nucleotide biosynthesis. Catalyzes the first committed step in the biosynthesis of AMP from IMP. The polypeptide is Adenylosuccinate synthetase (Parafrankia sp. (strain EAN1pec)).